A 355-amino-acid polypeptide reads, in one-letter code: Serpentine receptor class epsilon-1 (355 aa).

Helical transmembrane passes span 28 to 48, 56 to 76, 102 to 122, 144 to 164, 172 to 192, 232 to 252, and 268 to 288; these read FELL…YATI, LNFI…GRFI, ILSS…SLAV, ISLF…IVML, VMAF…LVLF, VVLF…MYMS, and FAFN…IIFS.

Belongs to the nematode receptor-like protein sre family.

It localises to the membrane. In Caenorhabditis elegans, this protein is Serpentine receptor class epsilon-1 (sre-1).